The chain runs to 489 residues: Cytochrome P450 monooxygenase trt6 (489 aa).

Residues 10–30 traverse the membrane as a helical segment; the sequence is SLWSFGLWILVILSPVLFFAS. N-linked (GlcNAc...) asparagine glycans are attached at residues asparagine 364 and asparagine 407. Cysteine 430 contributes to the heme binding site.

The protein belongs to the cytochrome P450 family. Heme is required as a cofactor.

It localises to the membrane. It functions in the pathway secondary metabolite biosynthesis; terpenoid biosynthesis. Functionally, cytochrome P450 monooxygenase; part of the gene cluster that mediates the biosynthesis of terretonin, a fungal meroterpenoid that acts as a mycotoxin. The first step of the pathway is the synthesis of 3,5-dimethylorsellinic acid (DMOA) by the polyketide synthase trt4. DMOA is then prenylated into farnesyl-DMOA by the polyprenyl transferase trt2. Methylation by the methyltransferase trt5 then leads to farnesyl-DMOA methyl ester which is further subject to epoxidation by the FAD-dependent monooxygenase trt8 to yield epoxyfarnesyl-DMOA methyl ester. Cyclization of epoxyfarnesyl-DMOA methyl ester by the terpene cyclase trt1 leads to a tetracycle intermediate which is in turn converted to preterretonin. Dehydrogenase trt9 comes next to transform preterretonin to preterrenoid. The FAD-dependent monooxygenase trt3 is then required for the C-hydroxylation at C16 of preterrenoid to yield terrenoid. The cytochrome P450 trt6 catalyzes three successive oxidations to transform terrenoid into an unstable intermediate, which then undergoes the D-ring expansion and unusual rearrangement of the methoxy group to afford the core skeleton of terretonin. Trt14 catalyzes the D-ring expansion of terretonin involving intramolecular methoxy rearrangement as well as the hydrolysis of the expanded D-ring and the methyl ester moiety. Finally, the nonheme iron-dependent dioxygenase trt7 accomplishes the last two oxidation reactions steps to complete the biosynthesis of terretonin. Terretonin C is produced via spontaneous decarboxylation of the terretonin precursor. Another shunt product of the terretonin biosynthesis is dihydrofarnesyl-DMOA, derived from epoxyfarnesyl-DMOA through hydrolysis of the epoxide. This Aspergillus terreus (strain NIH 2624 / FGSC A1156) protein is Cytochrome P450 monooxygenase trt6.